A 607-amino-acid chain; its full sequence is TOM1-like protein 8 (607 aa).

Residues 9–138 enclose the VHS domain; it reads ATSDMLIGPD…ELLRAGIVFP (130 aa). The disordered stretch occupies residues 141–175; it reads PQITPSSGQNGPSTRYPQNSRNARQEAIDTSTESE. The GAT domain occupies 175-263; sequence EFPTLSLTEI…LLAKHEAIAS (89 aa). Serine 297 is modified (phosphoserine). The span at 355-379 shows a compositional bias: polar residues; that stretch reads NNCESSTPTSNPHANHQKVQQNYSN. 3 disordered regions span residues 355–393, 407–460, and 555–582; these read NNCESSTPTSNPHANHQKVQQNYSNGFGPGHQEQSYYGQ, QPSS…SPTH, and DNGNNNTNPYQVSSHQPPPMMKPMNKKP. Serine 410 carries the phosphoserine modification. Residues 448–460 show a composition bias toward low complexity; that stretch reads QSPSSSPQYSPTH. Polar residues predominate over residues 555–569; sequence DNGNNNTNPYQVSSH.

It belongs to the TOM1 family. As to expression, specifically expressed in siliques and flowers.

The protein resides in the membrane. In terms of biological role, might contribute to the loading of the ESCRT machinery. This is TOM1-like protein 8 from Arabidopsis thaliana (Mouse-ear cress).